The sequence spans 848 residues: DNA mismatch repair protein MutS (848 aa).

Residue 605 to 612 (GPNMAGKS) coordinates ATP.

This sequence belongs to the DNA mismatch repair MutS family.

In terms of biological role, this protein is involved in the repair of mismatches in DNA. It is possible that it carries out the mismatch recognition step. This protein has a weak ATPase activity. This is DNA mismatch repair protein MutS from Leptospira borgpetersenii serovar Hardjo-bovis (strain JB197).